Here is a 434-residue protein sequence, read N- to C-terminus: Glutamate-1-semialdehyde 2,1-aminomutase 1 (434 aa).

Residue lysine 270 is modified to N6-(pyridoxal phosphate)lysine.

Belongs to the class-III pyridoxal-phosphate-dependent aminotransferase family. HemL subfamily. In terms of assembly, homodimer. It depends on pyridoxal 5'-phosphate as a cofactor.

It localises to the cytoplasm. It catalyses the reaction (S)-4-amino-5-oxopentanoate = 5-aminolevulinate. It functions in the pathway porphyrin-containing compound metabolism; protoporphyrin-IX biosynthesis; 5-aminolevulinate from L-glutamyl-tRNA(Glu): step 2/2. The protein is Glutamate-1-semialdehyde 2,1-aminomutase 1 of Bacillus thuringiensis subsp. konkukian (strain 97-27).